A 159-amino-acid chain; its full sequence is Ribosomal RNA large subunit methyltransferase H (159 aa).

S-adenosyl-L-methionine contacts are provided by L76 and G108.

This sequence belongs to the RNA methyltransferase RlmH family. Homodimer.

The protein localises to the cytoplasm. It carries out the reaction pseudouridine(1915) in 23S rRNA + S-adenosyl-L-methionine = N(3)-methylpseudouridine(1915) in 23S rRNA + S-adenosyl-L-homocysteine + H(+). Functionally, specifically methylates the pseudouridine at position 1915 (m3Psi1915) in 23S rRNA. The chain is Ribosomal RNA large subunit methyltransferase H from Natranaerobius thermophilus (strain ATCC BAA-1301 / DSM 18059 / JW/NM-WN-LF).